Here is a 257-residue protein sequence, read N- to C-terminus: Short chain dehydrogenase prhI (257 aa).

Residues 7–29 (HVVIITGSSSGIGLAASTLALAS) form a helical membrane-spanning segment. NADP(+) is bound at residue Ile11. A glycan (N-linked (GlcNAc...) asparagine) is linked at Asn50. Residue Asp57 participates in NADP(+) binding. Residues Asn92 and Asn110 are each glycosylated (N-linked (GlcNAc...) asparagine). 4 residues coordinate NADP(+): Arg119, Tyr151, Lys155, and Val184. Tyr151 (proton acceptor) is an active-site residue. Lys155 (lowers pKa of active site Tyr) is an active-site residue.

It belongs to the short-chain dehydrogenases/reductases (SDR) family.

Its subcellular location is the membrane. The catalysed reaction is protoaustinoid A + A = protoaustinoid B + AH2. Its pathway is secondary metabolite biosynthesis; terpenoid biosynthesis. Short chain dehydrogenase; part of the gene cluster that mediates the biosynthesis of paraherquonin, a meroterpenoid with a unique, highly congested hexacyclic molecular architecture. The first step of the pathway is the synthesis of 3,5-dimethylorsellinic acid (DMOA) by the polyketide synthase prhL. Synthesis of DMOA is followed by farnesylation by the prenyltransferase prhE, methylesterification by the methyl-transferase prhM, epoxidation of the prenyl chain by the flavin-dependent monooxygenase prhF, and cyclization of the farnesyl moiety by the terpene cyclase prhH, to yield the tetracyclic intermediate, protoaustinoid A. The short chain dehydrogenase prhI then oxidizes the C-3 alcohol group of the terpene cyclase product to transform protoaustinoid A into protoaustinoid B. The FAD-binding monooxygenase prhJ catalyzes the oxidation of protoaustinoid B into preaustinoid A which is further oxidized into preaustinoid A1 by FAD-binding monooxygenase phrK. Finally, prhA leads to berkeleydione via the berkeleyone B intermediate. PrhA is a multifunctional dioxygenase that first desaturates at C5-C6 to form berkeleyone B, followed by rearrangement of the A/B-ring to form the cycloheptadiene moiety in berkeleydione. Berkeleydione serves as the key intermediate for the biosynthesis of paraherquonin as well as many other meroterpenoids. The cytochrome P450 monooxygenases prhB, prhD, and prhN, as well as the isomerase prhC, are probably involved in the late stage of paraherquonin biosynthesis, after the production of berkeleydione. Especially prhC might be a multifunctional enzyme that catalyzes the D-ring expansion via intramolecular methoxy rearrangement, as well as the hydrolysis of the expanded D-ring. This is Short chain dehydrogenase prhI from Penicillium brasilianum.